The chain runs to 124 residues: Small ribosomal subunit protein uS12c (124 aa).

The protein belongs to the universal ribosomal protein uS12 family. Part of the 30S ribosomal subunit.

The protein resides in the plastid. The protein localises to the chloroplast. Functionally, with S4 and S5 plays an important role in translational accuracy. Located at the interface of the 30S and 50S subunits. The protein is Small ribosomal subunit protein uS12c (rps12) of Ostreococcus tauri.